The primary structure comprises 764 residues: 1,4-alpha-glucan branching enzyme GlgB (764 aa).

Asp434 serves as the catalytic Nucleophile. Residue Glu487 is the Proton donor of the active site.

Belongs to the glycosyl hydrolase 13 family. GlgB subfamily. Monomer.

It carries out the reaction Transfers a segment of a (1-&gt;4)-alpha-D-glucan chain to a primary hydroxy group in a similar glucan chain.. It functions in the pathway glycan biosynthesis; glycogen biosynthesis. In terms of biological role, catalyzes the formation of the alpha-1,6-glucosidic linkages in glycogen by scission of a 1,4-alpha-linked oligosaccharide from growing alpha-1,4-glucan chains and the subsequent attachment of the oligosaccharide to the alpha-1,6 position. This is 1,4-alpha-glucan branching enzyme GlgB from Nostoc sp. (strain PCC 7120 / SAG 25.82 / UTEX 2576).